Consider the following 427-residue polypeptide: MSVKWEKQEGNVGKLTFDIEQEKVKEGLDRAFVKVRKTLNVPGFRKGKVPRQIFNQRFGEEALYQDALDILLPEVYSQAIDEAGIDPVDTPQVNIESMEKGETWVLTAEVTVKPEVKLGDYKGLEVEKRETELTTEELEAELKQLQERQAELVVKEDAPAENGDTVILDFEGFKDGVAFEGGQAENHSLELGSGQFIPGFEEKLVGLKAGDEADIELTFPEEYHAEDLAGQPVVFKVKLHEIKTKEVPALDDELAKDIDEEVETLDELKEKISKRLQEAKEESVAQAKQEEVIAKAVENAEVDIPHAMVHHEADHLMNHFAQDLQAQGLTPELYYQFTGQTEEAMHAQMETDAEKRVKMNLVLEAIAEAENIEPTEEAIDEEISTLAEKYGMEKDAVRAALGDMSELKSDLKIRKAIDVLLDSAVEK.

The PPIase FKBP-type domain occupies 163 to 248 (GDTVILDFEG…LHEIKTKEVP (86 aa)).

The protein belongs to the FKBP-type PPIase family. Tig subfamily.

The protein localises to the cytoplasm. The enzyme catalyses [protein]-peptidylproline (omega=180) = [protein]-peptidylproline (omega=0). Involved in protein export. Acts as a chaperone by maintaining the newly synthesized protein in an open conformation. Functions as a peptidyl-prolyl cis-trans isomerase. The chain is Trigger factor from Listeria welshimeri serovar 6b (strain ATCC 35897 / DSM 20650 / CCUG 15529 / CIP 8149 / NCTC 11857 / SLCC 5334 / V8).